Consider the following 155-residue polypeptide: Glycine/sarcosine/betaine reductase complex component A (155 aa).

Selenocysteine 43 is an active-site residue. Position 43 (selenocysteine 43) is a non-standard amino acid, selenocysteine.

The protein belongs to the GrdA family. Monomer. Component of the glycine, sarcosine and betaine reductase complexes, together with components B and C.

The enzyme catalyses acetyl phosphate + [thioredoxin]-disulfide + NH4(+) + H2O = [thioredoxin]-dithiol + glycine + phosphate + H(+). It catalyses the reaction acetyl phosphate + methylamine + [thioredoxin]-disulfide + H2O = sarcosine + [thioredoxin]-dithiol + phosphate + H(+). It carries out the reaction acetyl phosphate + trimethylamine + [thioredoxin]-disulfide + H2O = glycine betaine + [thioredoxin]-dithiol + phosphate + H(+). Its function is as follows. In the first step of glycine, betaine and sarcosine reductases, the substrate is bound to component PB via a Schiff base intermediate. Then the PB-activated substrate is nucleophilically attacked by the selenol anion of component PA to transform it to a carboxymethylated selenoether and the respective amine. By action of component PC, acetyl phosphate is formed, leaving component PA in its oxidized state. Finally component PA becomes reduced by the thioredoxin system to start a new catalytic cycle of reductive deamination. This Symbiobacterium thermophilum (strain DSM 24528 / JCM 14929 / IAM 14863 / T) protein is Glycine/sarcosine/betaine reductase complex component A (grdA).